A 311-amino-acid polypeptide reads, in one-letter code: Olfactory receptor 8H1 (311 aa).

Residues 1 to 25 (MGRRNNTNVPDFILTGLSDSEEVQM) are Extracellular-facing. Residue N5 is glycosylated (N-linked (GlcNAc...) asparagine). The chain crosses the membrane as a helical span at residues 26-46 (ALFILFLLIYLITMLGNVGMI). Over 47 to 54 (LIIRLDLQ) the chain is Cytoplasmic. Residues 55–75 (LHTPMYFFLTHLSFIDLSYST) form a helical membrane-spanning segment. At 76-98 (VITPKTLANLLTSNYISFMGCFA) the chain is on the extracellular side. Residues C96 and C188 are joined by a disulfide bond. A helical transmembrane segment spans residues 99–119 (QMFFFVFLGAAECFLLSSMAY). Over 120 to 138 (DRYVAICSPLRYPVIMSKR) the chain is Cytoplasmic. Residues 139–159 (LCCALVTGPYVISFINSFVNV) traverse the membrane as a helical segment. The Extracellular segment spans residues 160 to 196 (VWMSRLHFCDSNVVRHFFCDTSPILALSCMDTYDIEI). The helical transmembrane segment at 197-216 (MIHILAGSTLMVSLITISAS) threads the bilayer. Residues 217-236 (YVSILSTILKINSTSGKQKA) are Cytoplasmic-facing. Residues 237–257 (LSTCASHLLGVTIFYGTMIFT) form a helical membrane-spanning segment. At 258–270 (YLKPRKSYSLGRD) the chain is on the extracellular side. Residues 271–291 (QVASVFYTIVIPMLNPLIYSL) traverse the membrane as a helical segment. Residues 292 to 311 (RNKEVKNALIRVMQRRQDSR) are Cytoplasmic-facing.

It belongs to the G-protein coupled receptor 1 family.

The protein localises to the cell membrane. Its function is as follows. Odorant receptor. This chain is Olfactory receptor 8H1 (OR8H1), found in Homo sapiens (Human).